The chain runs to 536 residues: Chaperonin GroEL 2 (536 aa).

ATP contacts are provided by residues 29–32 (TLGP), lysine 50, glycine 416, and aspartate 497.

The protein belongs to the chaperonin (HSP60) family. Forms a cylinder of 14 subunits composed of two heptameric rings stacked back-to-back. Interacts with the co-chaperonin GroES.

It is found in the cytoplasm. The catalysed reaction is ATP + H2O + a folded polypeptide = ADP + phosphate + an unfolded polypeptide.. In terms of biological role, together with its co-chaperonin GroES, plays an essential role in assisting protein folding. The GroEL-GroES system forms a nano-cage that allows encapsulation of the non-native substrate proteins and provides a physical environment optimized to promote and accelerate protein folding. This chain is Chaperonin GroEL 2, found in Chlamydia caviae (strain ATCC VR-813 / DSM 19441 / 03DC25 / GPIC) (Chlamydophila caviae).